A 488-amino-acid polypeptide reads, in one-letter code: Ribulose bisphosphate carboxylase large chain (488 aa).

Residues Asn128 and Thr178 each contribute to the substrate site. Lys180 serves as the catalytic Proton acceptor. Lys182 contributes to the substrate binding site. Mg(2+) contacts are provided by Lys206, Asp208, and Glu209. Lys206 carries the post-translational modification N6-carboxylysine. Catalysis depends on His298, which acts as the Proton acceptor. Residues Arg299, His331, and Ser383 each contribute to the substrate site.

This sequence belongs to the RuBisCO large chain family. Type I subfamily. As to quaternary structure, heterohexadecamer of 8 large chains and 8 small chains. It depends on Mg(2+) as a cofactor.

The catalysed reaction is 2 (2R)-3-phosphoglycerate + 2 H(+) = D-ribulose 1,5-bisphosphate + CO2 + H2O. It catalyses the reaction D-ribulose 1,5-bisphosphate + O2 = 2-phosphoglycolate + (2R)-3-phosphoglycerate + 2 H(+). Its function is as follows. RuBisCO catalyzes two reactions: the carboxylation of D-ribulose 1,5-bisphosphate, the primary event in carbon dioxide fixation, as well as the oxidative fragmentation of the pentose substrate. Both reactions occur simultaneously and in competition at the same active site. The polypeptide is Ribulose bisphosphate carboxylase large chain (Variovorax paradoxus (strain S110)).